We begin with the raw amino-acid sequence, 492 residues long: Catalase isozyme 1 (492 aa).

Residues His65 and Asn138 contribute to the active site. Tyr348 is a heme binding site.

It belongs to the catalase family. Homotetramer. It depends on heme as a cofactor. In terms of tissue distribution, high expression in seeds and early seedlings.

The protein resides in the glyoxysome. It catalyses the reaction 2 H2O2 = O2 + 2 H2O. In terms of biological role, occurs in almost all aerobically respiring organisms and serves to protect cells from the toxic effects of hydrogen peroxide. This chain is Catalase isozyme 1 (CAT1), found in Cucurbita pepo (Vegetable marrow).